The chain runs to 251 residues: Plant UBX domain-containing protein 1 (251 aa).

M1 carries the N-acetylmethionine modification. In terms of domain architecture, UBX spans S104–F180. The disordered stretch occupies residues A212 to M251. Over residues E217 to S227 the composition is skewed to polar residues. Residues V232 to T243 are compositionally biased toward basic and acidic residues.

As to quaternary structure, interacts with CDC48A (non-hexameric) via its UBX-containing C-terminal domain.

The protein localises to the cytoplasm. Functionally, regulates CDC48A by inhibiting its ATPase activity and by promoting the disassembly of the active hexamer. The protein is Plant UBX domain-containing protein 1 of Arabidopsis thaliana (Mouse-ear cress).